The following is a 270-amino-acid chain: ATP synthase subunit a 1 (270 aa).

5 consecutive transmembrane segments (helical) span residues 38–58, 98–118, 143–163, 208–228, and 239–259; these read VHID…GIFY, IAPL…MDLV, DVNI…YYSI, LFGN…MLPW, and AIFH…LTIV.

Belongs to the ATPase A chain family. F-type ATPases have 2 components, CF(1) - the catalytic core - and CF(0) - the membrane proton channel. CF(1) has five subunits: alpha(3), beta(3), gamma(1), delta(1), epsilon(1). CF(0) has three main subunits: a(1), b(2) and c(9-12). The alpha and beta chains form an alternating ring which encloses part of the gamma chain. CF(1) is attached to CF(0) by a central stalk formed by the gamma and epsilon chains, while a peripheral stalk is formed by the delta and b chains.

Its subcellular location is the cell inner membrane. Key component of the proton channel; it plays a direct role in the translocation of protons across the membrane. This chain is ATP synthase subunit a 1, found in Vibrio campbellii (strain ATCC BAA-1116).